The primary structure comprises 336 residues: DNA repair protein Rad51 homolog (336 aa).

The span at 1–10 (MEKLTNVQAQ) shows a compositional bias: polar residues. Residues 1-20 (MEKLTNVQAQQEEEEEEGPL) are disordered. Residue 124–131 (GEFRCGKT) participates in ATP binding.

It belongs to the RecA family. RAD51 subfamily. Interacts with Rrp6; the interaction is required for the recruitment of spn-A to the DNA-damage response foci. Highly expressed in ovaries.

The protein resides in the nucleus. It localises to the cytoplasm. Its function is as follows. Plays an important role in homologous strand exchange, a key step in DNA repair through homologous recombination (HR). Binds to single and double-stranded DNA and exhibits DNA-dependent ATPase activity. Underwinds duplex DNA. Spindle genes are required for each of the symmetry-breaking steps that generate polarity during egg axis formation; oocyte positioning at the posterior of the cyst to generate the first AP polarity and inhibition of gurken (grk) signaling to the follicle cell layer to polarize first the AP axis and then DV axis. May have a role in female meiosis. This Drosophila melanogaster (Fruit fly) protein is DNA repair protein Rad51 homolog (spn-A).